Consider the following 743-residue polypeptide: 1,4-alpha-glucan branching enzyme GlgB (743 aa).

Residue Asp423 is the Nucleophile of the active site. The Proton donor role is filled by Glu476.

The protein belongs to the glycosyl hydrolase 13 family. GlgB subfamily. In terms of assembly, monomer.

The catalysed reaction is Transfers a segment of a (1-&gt;4)-alpha-D-glucan chain to a primary hydroxy group in a similar glucan chain.. The protein operates within glycan biosynthesis; glycogen biosynthesis. In terms of biological role, catalyzes the formation of the alpha-1,6-glucosidic linkages in glycogen by scission of a 1,4-alpha-linked oligosaccharide from growing alpha-1,4-glucan chains and the subsequent attachment of the oligosaccharide to the alpha-1,6 position. This is 1,4-alpha-glucan branching enzyme GlgB from Pseudomonas fluorescens (strain Pf0-1).